Consider the following 285-residue polypeptide: Bifunctional protein FolD (285 aa).

Residues 164 to 166, Ile-189, and Ile-230 each bind NADP(+); that span reads GAS.

It belongs to the tetrahydrofolate dehydrogenase/cyclohydrolase family. Homodimer.

It carries out the reaction (6R)-5,10-methylene-5,6,7,8-tetrahydrofolate + NADP(+) = (6R)-5,10-methenyltetrahydrofolate + NADPH. The enzyme catalyses (6R)-5,10-methenyltetrahydrofolate + H2O = (6R)-10-formyltetrahydrofolate + H(+). The protein operates within one-carbon metabolism; tetrahydrofolate interconversion. Its function is as follows. Catalyzes the oxidation of 5,10-methylenetetrahydrofolate to 5,10-methenyltetrahydrofolate and then the hydrolysis of 5,10-methenyltetrahydrofolate to 10-formyltetrahydrofolate. The polypeptide is Bifunctional protein FolD (Sulfurimonas denitrificans (strain ATCC 33889 / DSM 1251) (Thiomicrospira denitrificans (strain ATCC 33889 / DSM 1251))).